A 781-amino-acid chain; its full sequence is Putative amine oxidase [copper-containing] (781 aa).

The signal sequence occupies residues 1–34 (MSLPKTANGMDKLKLCYLLLFYLGSSSLTEVSGA). A disulfide bond links cysteine 199 and cysteine 203. Residue 385–395 (FFDSSYMIGMN) coordinates substrate. Aspartate 387 acts as the Proton acceptor in catalysis. Cysteine 405 and cysteine 432 form a disulfide bridge. Position 472-477 (472-477 (IANYDY)) interacts with substrate. The Schiff-base intermediate with substrate; via topaquinone role is filled by tyrosine 475. Tyrosine 475 carries the 2',4',5'-topaquinone modification. The Cu cation site is built by histidine 525 and histidine 527. The Ca(2+) site is built by aspartate 534, aspartate 536, glutamate 579, phenylalanine 671, aspartate 674, glutamate 676, aspartate 682, and leucine 683. Residues aspartate 534 and aspartate 536 each contribute to the Mn(2+) site. Position 682 (aspartate 682) interacts with Mn(2+). Residue histidine 693 coordinates Cu cation.

This sequence belongs to the copper/topaquinone oxidase family. In terms of assembly, homodimer. Requires Cu cation as cofactor. It depends on Ca(2+) as a cofactor. The cofactor is L-topaquinone. Mn(2+) is required as a cofactor. Post-translationally, topaquinone (TPQ) is generated by copper-dependent autoxidation of a specific tyrosyl residue. Prismatic layer of shell (at protein level). Expressed primarily in the mantle with highest level in the mantle edge and lower level in the mantle pallium.

The protein localises to the secreted. The polypeptide is Putative amine oxidase [copper-containing] (Margaritifera margaritifera (Freshwater pearl mussel)).